We begin with the raw amino-acid sequence, 714 residues long: Fatty acid oxidation complex subunit alpha (714 aa).

An enoyl-CoA hydratase region spans residues 1 to 190 (MEMASAFTLN…KLGLVDDVVP (190 aa)). The segment at 306–714 (APLNSVGILG…FWKTTATDLQ (409 aa)) is 3-hydroxyacyl-CoA dehydrogenase.

In the N-terminal section; belongs to the enoyl-CoA hydratase/isomerase family. This sequence in the central section; belongs to the 3-hydroxyacyl-CoA dehydrogenase family. As to quaternary structure, heterotetramer of two alpha chains (FadJ) and two beta chains (FadI).

The protein localises to the cytoplasm. The enzyme catalyses a (3S)-3-hydroxyacyl-CoA = a (2E)-enoyl-CoA + H2O. It carries out the reaction a 4-saturated-(3S)-3-hydroxyacyl-CoA = a (3E)-enoyl-CoA + H2O. It catalyses the reaction a (3S)-3-hydroxyacyl-CoA + NAD(+) = a 3-oxoacyl-CoA + NADH + H(+). The catalysed reaction is (3S)-3-hydroxybutanoyl-CoA = (3R)-3-hydroxybutanoyl-CoA. It functions in the pathway lipid metabolism; fatty acid beta-oxidation. In terms of biological role, catalyzes the formation of a hydroxyacyl-CoA by addition of water on enoyl-CoA. Also exhibits 3-hydroxyacyl-CoA epimerase and 3-hydroxyacyl-CoA dehydrogenase activities. In Escherichia coli O9:H4 (strain HS), this protein is Fatty acid oxidation complex subunit alpha.